The primary structure comprises 161 residues: Small ribosomal subunit protein uS9 (161 aa).

This sequence belongs to the universal ribosomal protein uS9 family.

The polypeptide is Small ribosomal subunit protein uS9 (Bartonella henselae (strain ATCC 49882 / DSM 28221 / CCUG 30454 / Houston 1) (Rochalimaea henselae)).